The chain runs to 218 residues: Ras-related protein Rab-4A (218 aa).

Residues glycine 23, threonine 24, glycine 25, lysine 26, serine 27, cysteine 28, serine 42, histidine 44, and threonine 45 each coordinate GTP. Mg(2+) is bound at residue serine 27. The short motif at 44-49 (HTIGVE) is the Switch 1 element. Threonine 45 and aspartate 68 together coordinate Mg(2+). Positions 70-79 (AGQERFRSVT) match the Switch 2 motif. Glycine 71 contacts GTP. A 5-glutamyl serotonin modification is found at glutamine 72. The GTP site is built by asparagine 126, lysine 127, aspartate 129, alanine 157, and leucine 158. Phosphoserine is present on serine 190. The residue at position 204 (serine 204) is a Phosphoserine; by CDK1. 2 S-geranylgeranyl cysteine lipidation sites follow: cysteine 216 and cysteine 218. Cysteine 218 carries the post-translational modification Cysteine methyl ester.

It belongs to the small GTPase superfamily. Rab family. Interacts with SGSM1, SGSM2 and SGSM3. Interacts with RAB11FIP1, RABEP1, ZFYVE20 and RUFY1. Interacts (membrane-bound form) with NDRG1; the interaction involves NDRG1 in vesicular recycling of E-cadherin. Interacts (in GTP-bound form) with GRIPAP1 (via N-terminus). Interacts with RABEP1 and RBSN. Does not interact with HPS4. Interacts with RABEP2; this interaction may mediate VEGFR2 cell surface expression. Requires Mg(2+) as cofactor. In terms of processing, serotonylation of Gln-72 by TGM2 during activation and aggregation of platelets leads to constitutive activation of GTPase activity. Phosphorylated by CDK1 kinase during mitosis.

It is found in the membrane. The protein localises to the cytoplasm. Its subcellular location is the early endosome membrane. The protein resides in the recycling endosome membrane. It carries out the reaction GTP + H2O = GDP + phosphate + H(+). Its activity is regulated as follows. Regulated by guanine nucleotide exchange factors (GEFs) which promote the exchange of bound GDP for free GTP. Regulated by GTPase activating proteins (GAPs) which increase the GTP hydrolysis activity. Inhibited by GDP dissociation inhibitors (GDIs). The small GTPases Rab are key regulators of intracellular membrane trafficking, from the formation of transport vesicles to their fusion with membranes. Rabs cycle between an inactive GDP-bound form and an active GTP-bound form that is able to recruit to membranes different sets of downstream effectors directly responsible for vesicle formation, movement, tethering and fusion. RAB4A is involved in protein transport. Also plays a role in vesicular traffic. Mediates VEGFR2 endosomal trafficking to enhance VEGFR2 signaling. Acts as a regulator of platelet alpha-granule release during activation and aggregation of platelets. This chain is Ras-related protein Rab-4A, found in Rattus norvegicus (Rat).